A 142-amino-acid chain; its full sequence is MLMPRRVKYRKQQRGRMKGKAKGGTFVQFGEWGLKALEPAWITAQQIEACRIAMLRAMKRSGKIWIRIFPDKPYTKKPPESRMGKGKGNVEGWVAVVKPGKILFEVAGVDEETAHEALRYAASKLPIATKVVPRHHIGGEAV.

The protein belongs to the universal ribosomal protein uL16 family. Part of the 50S ribosomal subunit.

Binds 23S rRNA and is also seen to make contacts with the A and possibly P site tRNAs. This Thermotoga sp. (strain RQ2) protein is Large ribosomal subunit protein uL16.